The sequence spans 634 residues: Zinc finger and BTB domain-containing protein 22 (634 aa).

The 65-residue stretch at 57-121 (CDVSIRVQGR…AYTGRLSMAA (65 aa)) folds into the BTB domain. Disordered regions lie at residues 167 to 247 (TVPG…APVV) and 308 to 461 (APTP…GTSV). A compositionally biased stretch (low complexity) spans 180-198 (TVAPATMGSARSHASSRAS). Residues 199-209 (ENQSPSSSNYF) are compositionally biased toward polar residues. Ser202 is modified (phosphoserine). Low complexity predominate over residues 217 to 229 (FSSSSQEAFAASA). The segment covering 317–340 (PDLEEEEEEEDLVLTCEDDEDEEL) has biased composition (acidic residues). The segment covering 452 to 461 (GAVTVGGTSV) has biased composition (low complexity). The C2H2-type 1; atypical zinc finger occupies 486–507 (FLCHCGKAFSHKSMRDRHVNMH). C2H2-type zinc fingers lie at residues 513-535 (FDCP…MKTH) and 541-562 (YECG…HRGH). The interval 568–634 (RLGGVGAVPG…MGFGGGGGAN (67 aa)) is disordered. The segment covering 608-618 (PPSSRRVWSPP) has biased composition (low complexity).

Belongs to the krueppel C2H2-type zinc-finger protein family.

The protein resides in the nucleus. In terms of biological role, may be involved in transcriptional regulation. The protein is Zinc finger and BTB domain-containing protein 22 (ZBTB22) of Homo sapiens (Human).